The following is a 154-amino-acid chain: UPF0547 protein C16orf87 homolog (154 aa).

Residues 46–119 form a disordered region; the sequence is HPEKAPSSTE…KHEEEREKQE (74 aa). The span at 68-84 shows a compositional bias: basic and acidic residues; that stretch reads VRREKINSTVNKDLENR. S91 carries the post-translational modification Phosphoserine. Positions 104 to 132 form a coiled coil; it reads KSASAKKHEEEREKQEKEIDIYANLSDEK. The segment covering 109-119 has biased composition (basic and acidic residues); the sequence is KKHEEEREKQE.

The protein belongs to the UPF0547 family.

The protein is UPF0547 protein C16orf87 homolog of Bos taurus (Bovine).